An 874-amino-acid chain; its full sequence is Alanine--tRNA ligase (874 aa).

Zn(2+) contacts are provided by His-564, His-568, Cys-666, and His-670.

The protein belongs to the class-II aminoacyl-tRNA synthetase family. Zn(2+) serves as cofactor.

Its subcellular location is the cytoplasm. It carries out the reaction tRNA(Ala) + L-alanine + ATP = L-alanyl-tRNA(Ala) + AMP + diphosphate. Functionally, catalyzes the attachment of alanine to tRNA(Ala) in a two-step reaction: alanine is first activated by ATP to form Ala-AMP and then transferred to the acceptor end of tRNA(Ala). Also edits incorrectly charged Ser-tRNA(Ala) and Gly-tRNA(Ala) via its editing domain. This Carboxydothermus hydrogenoformans (strain ATCC BAA-161 / DSM 6008 / Z-2901) protein is Alanine--tRNA ligase.